A 161-amino-acid chain; its full sequence is Regulator of ribonuclease activity A (161 aa).

It belongs to the RraA family. As to quaternary structure, homotrimer. Binds to both RNA-binding sites in the C-terminal region of Rne and to RhlB.

It localises to the cytoplasm. Functionally, globally modulates RNA abundance by binding to RNase E (Rne) and regulating its endonucleolytic activity. Can modulate Rne action in a substrate-dependent manner by altering the composition of the degradosome. Modulates RNA-binding and helicase activities of the degradosome. The sequence is that of Regulator of ribonuclease activity A from Pectobacterium atrosepticum (strain SCRI 1043 / ATCC BAA-672) (Erwinia carotovora subsp. atroseptica).